We begin with the raw amino-acid sequence, 463 residues long: Cysteine--tRNA ligase (463 aa).

Cys-27 lines the Zn(2+) pocket. The 'HIGH' region motif lies at 29 to 39 (MTVYDYCHLGH). The Zn(2+) site is built by Cys-208, His-233, and Glu-237. The short motif at 265-269 (KMSKS) is the 'KMSKS' region element. Lys-268 serves as a coordination point for ATP.

The protein belongs to the class-I aminoacyl-tRNA synthetase family. Monomer. The cofactor is Zn(2+).

Its subcellular location is the cytoplasm. The catalysed reaction is tRNA(Cys) + L-cysteine + ATP = L-cysteinyl-tRNA(Cys) + AMP + diphosphate. The polypeptide is Cysteine--tRNA ligase (Marinobacter nauticus (strain ATCC 700491 / DSM 11845 / VT8) (Marinobacter aquaeolei)).